The following is a 795-amino-acid chain: ATP-dependent RNA helicase DHX15 (795 aa).

Residues 1-108 (MSKRHRLDLG…HSTHAGHAGH (108 aa)) are disordered. Position 15 is a phosphoserine (S15). Residues 20-62 (AGTDGKDRDRDRDREDRSKDRDRERDRGDREREREKEKEKELR) show a composition bias toward basic and acidic residues. The segment covering 79 to 108 (ASHSAHSTHSAHSAHSTHSAHSTHAGHAGH) has biased composition (low complexity). Residues 147-313 (TDILVRHQSF…FDNCPLLTIP (167 aa)) form the Helicase ATP-binding domain. 160-167 (GETGSGKT) provides a ligand contact to ATP. The DEAH box signature appears at 260-263 (DEAH). Residues 338 to 518 (TVIQIHMCEE…SVVLQLKKLG (181 aa)) enclose the Helicase C-terminal domain. K488 carries the N6-acetyllysine modification. Residue K786 forms a Glycyl lysine isopeptide (Lys-Gly) (interchain with G-Cter in SUMO2) linkage.

This sequence belongs to the DEAD box helicase family. DEAH subfamily. DDX15/PRP43 sub-subfamily. In terms of assembly, component of the U11/U12 snRNPs that are part of the U12-type spliceosome. Identified in the Intron Large spliceosome complex (IL, also named intron lariat spliceosome), a post-mRNA release spliceosomal complex containing the excised intron, U2, U5 and U6 snRNPs, and splicing factors; the association may be transient. The IL complex exists in two distinct conformations, one with the DHX15 (ILS2) and one without (ILS1). Interacts with TFIP11 (via G-patch domain); indicative for a recruitment to the IL complex. Interacts with SSB/La. Interacts with GPATCH2 (via G-patch domain); promoting the RNA helicase activity. Interacts with NKRF (via G-patch domain); promoting the RNA helicase activity. Interacts with NLRP6.

It localises to the nucleus. It is found in the nucleolus. The enzyme catalyses ATP + H2O = ADP + phosphate + H(+). Its activity is regulated as follows. ATPase activity is enhanced upon binding to G-patch domain-containing proteins. G-patch domain-containing proteins act like a brace that tethers mobile sections of DHX15 together, stabilizing a functional conformation with high RNA affinity, thereby promoting the ATPase activity. Functionally, RNA helicase involved in mRNA processing and antiviral innate immunity. Pre-mRNA processing factor involved in disassembly of spliceosomes after the release of mature mRNA. In cooperation with TFIP11 seem to be involved in the transition of the U2, U5 and U6 snRNP-containing IL complex to the snRNP-free IS complex leading to efficient debranching and turnover of excised introns. Plays a key role in antiviral innate immunity by promoting both MAVS-dependent signaling and NLRP6 inflammasome. Acts as an RNA virus sensor: recognizes and binds viral double stranded RNA (dsRNA) and activates the MAVS-dependent signaling to produce interferon-beta and interferon lambda-3 (IFNL3). Involved in intestinal antiviral innate immunity together with NLRP6: recognizes and binds viral dsRNA and promotes activation of the NLRP6 inflammasome in intestinal epithelial cells to restrict infection by enteric viruses. The NLRP6 inflammasome acts by promoting maturation and secretion of IL18 in the extracellular milieu. Also involved in antibacterial innate immunity by promoting Wnt-induced antimicrobial protein expression in Paneth cells. The protein is ATP-dependent RNA helicase DHX15 of Pongo abelii (Sumatran orangutan).